The primary structure comprises 585 residues: MDEIVNIVRDSMWFIPNVFMDNGENDGHVSVNNVCHMYFAFFDVDTSSHLFKLVIKHCDLNKQLKCGMSPLHCYVMNTRFKPSVLKILLHNGVNNFDNKDNKGHIPLHHYLIYSLSIDNKVFDILTDPIDDFSKSSDLLLCYLRYKFNGRLNYYVLYKLLTKGSDPNCVDEDGLTSLHYYCKHISAFHESNYYKSKSYTKMRAEKRFIYTIINHGANINAVTKIGNTPLHTYLQQYTKHSPRVVYALLSRGADTRIRNNFDCTPIMEYIKNDCVTGHILIMLLNWHEQKYGKLQKEEGHHLLYLFIKHNQGYGSHAFNILRYLLDRFDIQKDEYYNTMTPLHTAFQNCNNNVASYLVYIGYDINLPTKDDKTVFDLVFENRNILFNAGVIHNIIHHRLKVSLPMIKSLFYKMLEFSPYDDYYVKKIIAYCILRDESFTELHSKFCLNEDYKSVFMKNISFDKIDSIIKKCNWDISRLKDIQISDTNLYTVLRTEDIRYRTYLKAIHLDSHISFPMYDDLIEQCHLSMERKSKLVDKVLNKLKSTIDGQSRLSYLPPEIIRNIITKLSDYHLNSMLYGKNHYKYYT.

ANK repeat units follow at residues 66-98 (CGMS…NFDN), 172-220 (DGLT…NINA), 224-256 (IGNT…DTRI), 297-333 (EGHH…QKDE), and 336-365 (NTMT…DINL). The interval 554 to 571 (LPPEIIRNIITKLSDYHL) is PRANC/F-box-like.

It belongs to the orthopoxvirus OPG003 family.

Functionally, may be involved in virus-host protein interaction through the ankyrin repeats and PRANC regions. The sequence is that of Ankyrin repeat protein OPG003 (OPG003) from Homo sapiens (Human).